A 611-amino-acid chain; its full sequence is ATP-dependent zinc metalloprotease FtsH 1 (611 aa).

The Cytoplasmic portion of the chain corresponds to 1 to 6; it reads MNDNNK. A helical transmembrane segment spans residues 7-27; sequence IIRSMVLYLLIFIAIYAMVQL. Residues 28-107 lie on the Extracellular side of the membrane; the sequence is YSQSTEPITD…KSEPQVGPPW (80 aa). The helical transmembrane segment at 108–128 threads the bilayer; that stretch reads WVQMLPSLFLIVIFIIFWYIF. 124 to 131 contributes to the ATP binding site; it reads FWYIFMQQ. The Cytoplasmic segment spans residues 129 to 611; that stretch reads MQQAQGGGGS…GEDIEGVQFA (483 aa). Residue His423 coordinates Zn(2+). Residue Glu424 is part of the active site. Zn(2+) contacts are provided by His427 and Asp499.

The protein in the central section; belongs to the AAA ATPase family. In the C-terminal section; belongs to the peptidase M41 family. In terms of assembly, homohexamer. Zn(2+) serves as cofactor.

The protein localises to the cell membrane. Acts as a processive, ATP-dependent zinc metallopeptidase for both cytoplasmic and membrane proteins. Plays a role in the quality control of integral membrane proteins. The chain is ATP-dependent zinc metalloprotease FtsH 1 from Thermoanaerobacter sp. (strain X514).